The following is a 290-amino-acid chain: MTKTSKASGLSWFFCDLDGTLLRYQNNQHLIEPTTKRAVAQLVESGANFVVATGRKPSDVRNIYKELGIEQASPYLIANNGAVVWDLKRNSYLNKQTLSLSDFDLIDHINQTLNQLNHEYGCILYGLNDQVYFYHIHAPDSQAFKQYFAFYEGEFVQNQYLEIDGLKTEYNLVKAIWFFKEVHQQKAVIAQHFTNQERLVITSAHSFELVPLNVSKGHAINLIKQQVKITDNQIMVLGDSYNDLPMFQHGVVKVTNHLAPDNLKQLATRVYELPASLFVGQALNDYFKFD.

The active-site Nucleophile is Asp16. Asp16 is a Mg(2+) binding site. Residue Leu17 participates in phosphate binding. A Mg(2+)-binding site is contributed by Asp18. Phosphate-binding positions include 53-54 (TG) and Lys216. Residues Asp239 and Ser240 each coordinate Mg(2+). Residue Asn242 coordinates phosphate.

It belongs to the HAD-like hydrolase superfamily. Cof family. It depends on Mg(2+) as a cofactor.

This chain is Putative phosphatase MPN_427, found in Mycoplasma pneumoniae (strain ATCC 29342 / M129 / Subtype 1) (Mycoplasmoides pneumoniae).